The sequence spans 518 residues: Chaperonin GroEL (518 aa).

ATP contacts are provided by residues Thr-30–Pro-33, Lys-51, Asp-87–Thr-91, and Gly-415.

It belongs to the chaperonin (HSP60) family. In terms of assembly, forms a cylinder of 14 subunits composed of two heptameric rings stacked back-to-back. Interacts with the co-chaperonin GroES.

Its subcellular location is the cytoplasm. It carries out the reaction ATP + H2O + a folded polypeptide = ADP + phosphate + an unfolded polypeptide.. Together with its co-chaperonin GroES, plays an essential role in assisting protein folding. The GroEL-GroES system forms a nano-cage that allows encapsulation of the non-native substrate proteins and provides a physical environment optimized to promote and accelerate protein folding. This Desulfotalea psychrophila (strain LSv54 / DSM 12343) protein is Chaperonin GroEL.